Here is a 406-residue protein sequence, read N- to C-terminus: Probable 2,3-bisphosphoglycerate-independent phosphoglycerate mutase (406 aa).

The protein belongs to the BPG-independent phosphoglycerate mutase family. A-PGAM subfamily.

The catalysed reaction is (2R)-2-phosphoglycerate = (2R)-3-phosphoglycerate. The protein operates within carbohydrate degradation; glycolysis; pyruvate from D-glyceraldehyde 3-phosphate: step 3/5. Its function is as follows. Catalyzes the interconversion of 2-phosphoglycerate and 3-phosphoglycerate. The polypeptide is Probable 2,3-bisphosphoglycerate-independent phosphoglycerate mutase (Thermus thermophilus (strain ATCC 27634 / DSM 579 / HB8)).